The chain runs to 308 residues: Aspartate carbamoyltransferase catalytic subunit (308 aa).

2 residues coordinate carbamoyl phosphate: Arg49 and Thr50. Residue Lys77 participates in L-aspartate binding. The carbamoyl phosphate site is built by Arg99, His127, and Gln130. 2 residues coordinate L-aspartate: Arg160 and Arg211. Carbamoyl phosphate is bound by residues Ala252 and Pro253.

It belongs to the aspartate/ornithine carbamoyltransferase superfamily. ATCase family. As to quaternary structure, heterododecamer (2C3:3R2) of six catalytic PyrB chains organized as two trimers (C3), and six regulatory PyrI chains organized as three dimers (R2).

It catalyses the reaction carbamoyl phosphate + L-aspartate = N-carbamoyl-L-aspartate + phosphate + H(+). Its pathway is pyrimidine metabolism; UMP biosynthesis via de novo pathway; (S)-dihydroorotate from bicarbonate: step 2/3. Catalyzes the condensation of carbamoyl phosphate and aspartate to form carbamoyl aspartate and inorganic phosphate, the committed step in the de novo pyrimidine nucleotide biosynthesis pathway. This Geobacillus kaustophilus (strain HTA426) protein is Aspartate carbamoyltransferase catalytic subunit.